Here is a 452-residue protein sequence, read N- to C-terminus: Trigger factor (452 aa).

Residues 171 to 256 enclose the PPIase FKBP-type domain; it reads GDRVKVNFKG…ATAIETPEEK (86 aa).

The protein belongs to the FKBP-type PPIase family. Tig subfamily.

The protein resides in the cytoplasm. The catalysed reaction is [protein]-peptidylproline (omega=180) = [protein]-peptidylproline (omega=0). Functionally, involved in protein export. Acts as a chaperone by maintaining the newly synthesized protein in an open conformation. Functions as a peptidyl-prolyl cis-trans isomerase. The sequence is that of Trigger factor from Bradyrhizobium sp. (strain BTAi1 / ATCC BAA-1182).